A 475-amino-acid chain; its full sequence is Aspartyl/glutamyl-tRNA(Asn/Gln) amidotransferase subunit B (475 aa).

This sequence belongs to the GatB/GatE family. GatB subfamily. As to quaternary structure, heterotrimer of A, B and C subunits.

It carries out the reaction L-glutamyl-tRNA(Gln) + L-glutamine + ATP + H2O = L-glutaminyl-tRNA(Gln) + L-glutamate + ADP + phosphate + H(+). It catalyses the reaction L-aspartyl-tRNA(Asn) + L-glutamine + ATP + H2O = L-asparaginyl-tRNA(Asn) + L-glutamate + ADP + phosphate + 2 H(+). Its function is as follows. Allows the formation of correctly charged Asn-tRNA(Asn) or Gln-tRNA(Gln) through the transamidation of misacylated Asp-tRNA(Asn) or Glu-tRNA(Gln) in organisms which lack either or both of asparaginyl-tRNA or glutaminyl-tRNA synthetases. The reaction takes place in the presence of glutamine and ATP through an activated phospho-Asp-tRNA(Asn) or phospho-Glu-tRNA(Gln). The sequence is that of Aspartyl/glutamyl-tRNA(Asn/Gln) amidotransferase subunit B from Hydrogenovibrio crunogenus (strain DSM 25203 / XCL-2) (Thiomicrospira crunogena).